The chain runs to 275 residues: Large ribosomal subunit protein uL2 (275 aa).

Positions 225–275 are disordered; the sequence is MNPVDHPHGGGEGRSPIGRPPVTPWGKPALGTRTRNKKKASSKLIVKRRTK. Residues 258–275 are compositionally biased toward basic residues; the sequence is TRNKKKASSKLIVKRRTK.

This sequence belongs to the universal ribosomal protein uL2 family. As to quaternary structure, part of the 50S ribosomal subunit. Forms a bridge to the 30S subunit in the 70S ribosome.

Its function is as follows. One of the primary rRNA binding proteins. Required for association of the 30S and 50S subunits to form the 70S ribosome, for tRNA binding and peptide bond formation. It has been suggested to have peptidyltransferase activity; this is somewhat controversial. Makes several contacts with the 16S rRNA in the 70S ribosome. This is Large ribosomal subunit protein uL2 from Desulforudis audaxviator (strain MP104C).